A 432-amino-acid polypeptide reads, in one-letter code: Glutamate-1-semialdehyde 2,1-aminomutase (432 aa).

N6-(pyridoxal phosphate)lysine is present on Lys-272.

It belongs to the class-III pyridoxal-phosphate-dependent aminotransferase family. HemL subfamily. In terms of assembly, homodimer. Pyridoxal 5'-phosphate is required as a cofactor.

It localises to the cytoplasm. The catalysed reaction is (S)-4-amino-5-oxopentanoate = 5-aminolevulinate. Its pathway is porphyrin-containing compound metabolism; protoporphyrin-IX biosynthesis; 5-aminolevulinate from L-glutamyl-tRNA(Glu): step 2/2. It participates in porphyrin-containing compound metabolism; chlorophyll biosynthesis. The chain is Glutamate-1-semialdehyde 2,1-aminomutase from Trichormus variabilis (strain ATCC 29413 / PCC 7937) (Anabaena variabilis).